Here is a 737-residue protein sequence, read N- to C-terminus: Exostosin-1c (737 aa).

Residues 1 to 6 (MQARKK) lie on the Cytoplasmic side of the membrane. Residues 7–27 (YVLLGLCTCCWILLYYWAGLQ) traverse the membrane as a helical; Signal-anchor for type II membrane protein segment. The Lumenal portion of the chain corresponds to 28 to 737 (ERLLGLITHR…RKRYKDLERV (710 aa)). N-linked (GlcNAc...) asparagine glycosylation is found at N194 and N322. Residues R432, R540, D556, E557, D558, E644, D645, and R692 each coordinate UDP-N-acetyl-alpha-D-glucosamine. D558 lines the Mn(2+) pocket. A disulfide bond links C643 and C695. The active site involves D645.

Belongs to the glycosyltransferase 47 family. It depends on Mn(2+) as a cofactor.

Its subcellular location is the endoplasmic reticulum membrane. The catalysed reaction is 3-O-{[(1-&gt;4)-beta-D-GlcA-(1-&gt;4)-alpha-D-GlcNAc](n)-(1-&gt;4)-beta-D-GlcA-(1-&gt;3)-beta-D-Gal-(1-&gt;3)-beta-D-Gal-(1-&gt;4)-beta-D-Xyl}-L-seryl-[protein] + UDP-N-acetyl-alpha-D-glucosamine = 3-O-{alpha-D-GlcNAc-[(1-&gt;4)-beta-D-GlcA-(1-&gt;4)-alpha-D-GlcNAc](n)-(1-&gt;4)-beta-D-GlcA-(1-&gt;3)-beta-D-Gal-(1-&gt;3)-beta-D-Gal-(1-&gt;4)-beta-D-Xyl}-L-seryl-[protein] + UDP + H(+). It carries out the reaction 3-O-{alpha-D-GlcNAc-[(1-&gt;4)-beta-D-GlcA-(1-&gt;4)-alpha-D-GlcNAc](n)-(1-&gt;4)-beta-D-GlcA-(1-&gt;3)-beta-D-Gal-(1-&gt;3)-beta-D-Gal-(1-&gt;4)-beta-D-Xyl}-L-seryl-[protein] + UDP-alpha-D-glucuronate = 3-O-{[(1-&gt;4)-beta-D-GlcA-(1-&gt;4)-alpha-D-GlcNAc](n+1)-(1-&gt;4)-beta-D-GlcA-(1-&gt;3)-beta-D-Gal-(1-&gt;3)-beta-D-Gal-(1-&gt;4)-beta-D-Xyl}-L-seryl-[protein] + UDP + H(+). It functions in the pathway protein modification; protein glycosylation. Functionally, glycosyltransferase required for the biosynthesis of heparan-sulfate. The chain is Exostosin-1c (ext1c) from Danio rerio (Zebrafish).